Consider the following 276-residue polypeptide: NADPH-dependent 7-cyano-7-deazaguanine reductase (276 aa).

83–85 serves as a coordination point for substrate; sequence IES. NADPH is bound at residue 85 to 86; it reads SK. Residue cysteine 184 is the Thioimide intermediate of the active site. Aspartate 191 (proton donor) is an active-site residue. 223-224 lines the substrate pocket; that stretch reads HE. An NADPH-binding site is contributed by 252–253; sequence RG.

Belongs to the GTP cyclohydrolase I family. QueF type 2 subfamily. Homodimer.

The protein resides in the cytoplasm. It carries out the reaction 7-aminomethyl-7-carbaguanine + 2 NADP(+) = 7-cyano-7-deazaguanine + 2 NADPH + 3 H(+). It participates in tRNA modification; tRNA-queuosine biosynthesis. In terms of biological role, catalyzes the NADPH-dependent reduction of 7-cyano-7-deazaguanine (preQ0) to 7-aminomethyl-7-deazaguanine (preQ1). This is NADPH-dependent 7-cyano-7-deazaguanine reductase from Pseudomonas savastanoi pv. phaseolicola (strain 1448A / Race 6) (Pseudomonas syringae pv. phaseolicola (strain 1448A / Race 6)).